The primary structure comprises 354 residues: MKVAILGAGCYRTHAASGITNFSRAAQVAKEAGMPEIAMTHSTITMGAELLHLIPEITEVVVSDPCFGEEPGMIVLDQFDYKAVMEAHLAGEAEKVMPEIRAAVTAKAKETPKPPKGCIHFVHPETIGLKVTASDVEAVKDADIVITWLPKGGSQPAIIEKFASEIKKGAIVTHACTIPTPKFAKIFKDLGRDDLNIIAYHPGAVPENKGQAFLSEGLADAEKVEEFYCIAKAARGEAFKMPAKLISPVCDMGSAVTAPVYAGILAYRDAVTQILGAPADFAQMMADEAITQLLDLMRSEGIKNMEDKLNPKALTGTADSMCFGPLADILPASLKVLEKHANENKCECGNSIKP.

This sequence belongs to the HMD family.

The catalysed reaction is 5,10-methenyl-5,6,7,8-tetrahydromethanopterin + H2 = 5,10-methylenetetrahydromethanopterin + H(+). It participates in one-carbon metabolism; methanogenesis from CO(2); 5,10-methylene-5,6,7,8-tetrahydromethanopterin from 5,10-methenyl-5,6,7,8-tetrahydromethanopterin (hydrogen route): step 1/1. Catalyzes the reversible reduction of methenyl-H(4)MPT(+) to methylene-H(4)MPT. The protein is 5,10-methenyltetrahydromethanopterin hydrogenase of Methanococcus maripaludis (strain C7 / ATCC BAA-1331).